We begin with the raw amino-acid sequence, 428 residues long: Adenylosuccinate synthetase (428 aa).

GTP is bound by residues 11–17 (GDEGKGK) and 39–41 (GHT). Aspartate 12 (proton acceptor) is an active-site residue. Residues aspartate 12 and glycine 39 each contribute to the Mg(2+) site. IMP is bound by residues 12–15 (DEGK), 37–40 (NAGH), threonine 130, arginine 144, asparagine 226, threonine 241, and arginine 305. Histidine 40 serves as the catalytic Proton donor. A substrate-binding site is contributed by 301-307 (VTTGRKR). GTP is bound by residues arginine 307, 333–335 (KLD), and 415–417 (GTG).

This sequence belongs to the adenylosuccinate synthetase family. Homodimer. Mg(2+) serves as cofactor.

Its subcellular location is the cytoplasm. It carries out the reaction IMP + L-aspartate + GTP = N(6)-(1,2-dicarboxyethyl)-AMP + GDP + phosphate + 2 H(+). The protein operates within purine metabolism; AMP biosynthesis via de novo pathway; AMP from IMP: step 1/2. In terms of biological role, plays an important role in the de novo pathway and in the salvage pathway of purine nucleotide biosynthesis. Catalyzes the first committed step in the biosynthesis of AMP from IMP. This chain is Adenylosuccinate synthetase, found in Candida dubliniensis (strain CD36 / ATCC MYA-646 / CBS 7987 / NCPF 3949 / NRRL Y-17841) (Yeast).